A 152-amino-acid chain; its full sequence is ALK and LTK ligand 2 (152 aa).

Positions 1–24 are cleaved as a signal peptide; that stretch reads MRGPGHPLLLGLLLVLGAAGRGRG. Intrachain disulfides connect cysteine 111/cysteine 147 and cysteine 125/cysteine 134.

Belongs to the ALKAL family. As to quaternary structure, homodimer; interchain disulfide bond is not required for homodimerization. In terms of tissue distribution, widely expressed with highest levels in adrenal gland and modest levels in pancreas, testis and uterus.

The protein resides in the secreted. It localises to the cell membrane. Cytokine that acts as a physiological ligand for receptor tyrosine kinases LTK and ALK, leading to their activation. Cytokine-binding is sufficient to activate LTK. In contrast, ALKAL2-driven activation of ALK is coupled with heparin-binding to ALK. Stimulation of ALK signaling is involved in neural development and regulation of energy expenditure. The sequence is that of ALK and LTK ligand 2 from Homo sapiens (Human).